The chain runs to 667 residues: Alpha-1,4-glucan:maltose-1-phosphate maltosyltransferase (667 aa).

Alpha-maltose 1-phosphate contacts are provided by Lys-261, Gln-321, and Asp-356. The active-site Nucleophile is the Asp-392. Residue Asn-393 participates in alpha-maltose 1-phosphate binding. Glu-421 (proton donor) is an active-site residue. 534–535 (KY) is an alpha-maltose 1-phosphate binding site.

Belongs to the glycosyl hydrolase 13 family. GlgE subfamily. Homodimer.

It catalyses the reaction alpha-maltose 1-phosphate + [(1-&gt;4)-alpha-D-glucosyl](n) = [(1-&gt;4)-alpha-D-glucosyl](n+2) + phosphate. Its function is as follows. Maltosyltransferase that uses maltose 1-phosphate (M1P) as the sugar donor to elongate linear or branched alpha-(1-&gt;4)-glucans. Is involved in a branched alpha-glucan biosynthetic pathway from trehalose, together with TreS, Mak and GlgB. This is Alpha-1,4-glucan:maltose-1-phosphate maltosyltransferase from Methylacidiphilum infernorum (isolate V4) (Methylokorus infernorum (strain V4)).